The primary structure comprises 488 residues: Ribulose bisphosphate carboxylase large chain 1 (488 aa).

2 residues coordinate substrate: asparagine 127 and threonine 177. The active-site Proton acceptor is lysine 179. A substrate-binding site is contributed by lysine 181. Mg(2+) is bound by residues lysine 205, aspartate 207, and glutamate 208. Lysine 205 is subject to N6-carboxylysine. The active-site Proton acceptor is the histidine 297. Positions 298, 330, and 382 each coordinate substrate.

This sequence belongs to the RuBisCO large chain family. Type I subfamily. As to quaternary structure, heterohexadecamer of 8 large chains and 8 small chains. The cofactor is Mg(2+).

The enzyme catalyses 2 (2R)-3-phosphoglycerate + 2 H(+) = D-ribulose 1,5-bisphosphate + CO2 + H2O. The catalysed reaction is D-ribulose 1,5-bisphosphate + O2 = 2-phosphoglycolate + (2R)-3-phosphoglycerate + 2 H(+). In terms of biological role, ruBisCO catalyzes two reactions: the carboxylation of D-ribulose 1,5-bisphosphate, the primary event in carbon dioxide fixation, as well as the oxidative fragmentation of the pentose substrate. Both reactions occur simultaneously and in competition at the same active site. This is Ribulose bisphosphate carboxylase large chain 1 from Bradyrhizobium sp. (strain BTAi1 / ATCC BAA-1182).